The primary structure comprises 222 residues: MIF4G domain-containing protein (222 aa).

The MIF4G domain occupies 3–205 (EASRDDYKIQ…LEMIEFRAAG (203 aa)).

The protein belongs to the MIF4GD family. Interacts with EIF4G1, EIF4G2 and SLBP; probably tethered by SLBP to the 3'-end of mRNAs ending with the histone stem-loop, it also interacts with EIF4G1 which is bound to their 5'-end.

It localises to the cytoplasm. Its subcellular location is the nucleus. Functionally, functions in replication-dependent translation of histone mRNAs which differ from other eukaryotic mRNAs in that they do not end with a poly-A tail but a stem-loop. May participate in circularizing those mRNAs specifically enhancing their translation. The polypeptide is MIF4G domain-containing protein (Mif4gd) (Mus musculus (Mouse)).